The chain runs to 243 residues: Homeobox protein goosecoid isoform B (243 aa).

Residues 148 to 207 (KRRHRTIFTDEQLEALENLFQETKYPDVGTREQLARRVHLREEKVEVWFKNRRAKWRRQK) constitute a DNA-binding region (homeobox). Residues 201 to 243 (AKWRRQKRSSSEESENAQKWNKSSKNSAEKRDEQAKSDLDSDS) are disordered. The span at 217–226 (AQKWNKSSKN) shows a compositional bias: polar residues. Residues 227 to 243 (SAEKRDEQAKSDLDSDS) are compositionally biased toward basic and acidic residues.

This sequence belongs to the paired homeobox family. Bicoid subfamily.

The protein localises to the nucleus. Its function is as follows. Plays a central role in executing Spemann's organizer phenomenon (the dorsal blastopore lip of the early Xenopus laevis gastrula can organize a complete secondary body axis when transplanted to another embryo). The sequence is that of Homeobox protein goosecoid isoform B (gsc-b) from Xenopus laevis (African clawed frog).